Here is a 419-residue protein sequence, read N- to C-terminus: Ubiquitin receptor RAD23c (419 aa).

Residues 1–79 form the Ubiquitin-like domain; it reads MKIFVKTLKG…IVIMMNKSKP (79 aa). Over residues 83–118 the composition is skewed to low complexity; sequence AASSASAGTSQAKSIPPSTSQPSISPQTPASVSAPV. Residues 83–172 are disordered; that stretch reads AASSASAGTS…DSAPVGSQGD (90 aa). Residues 119-135 are compositionally biased toward pro residues; sequence APAPTRPPPPAPTPTPA. The segment covering 136–146 has biased composition (low complexity); sequence PVAATETVTTP. A UBA 1 domain is found at 185 to 228; that stretch reads SNLESTIQQILDMGGGTWDRETVVLALRAAFNNPERAVEYLYTG. The segment at 235–282 is disordered; it reads VPPVARPPASAGQPANPPAQTQQPAAAPASGPNANPLDLFPQGLPNVG. Positions 245–270 are enriched in low complexity; it reads AGQPANPPAQTQQPAAAPASGPNANP. The STI1 domain maps to 288-331; it reads GTLDFLRNSQQFQALRAMVQANPQVLQPMLQELGKQNPNLMRLI. Positions 372 to 413 constitute a UBA 2 domain; the sequence is THEEREAIERLEAMGFERALVLEVFFACNKNEELAANYLLDH.

The protein belongs to the RAD23 family. Interacts with 'Lys-48'-linked polyubiquitin chains via its both UBA domains. Interacts with RPN10 via its ubiquitin-like domain. Widely expressed in the whole plant.

Its subcellular location is the nucleus. It localises to the cytoplasm. May be involved in nucleotide excision repair. Binds and presumably selects ubiquitin-conjugates for destruction. Prefers multiubiquitin chains rather than single ubiquitins, with a binding affinity for 'Lys-48'-linked ubiquitin chains. Acts as a ubiquitin receptor that associates with the 26S proteasomal docking subunit RPN10 for the indirect recognition of ubiquitinated substrates of ubiquitin/26S proteasome-mediated proteolysis (UPP). Involved in UV tolerance in hypocotyls, specifically in dark conditions. The chain is Ubiquitin receptor RAD23c from Arabidopsis thaliana (Mouse-ear cress).